Consider the following 846-residue polypeptide: cGMP-dependent protein kinase (846 aa).

Residues 1–22 are autoinhibitory segment; that stretch reads MRCNERNKKKAIFSNDDFSGED. CNMP-binding domain stretches follow at residues 51-166, 169-268, 288-391, and 411-510; these read VCST…FIDS, VFDM…IVLG, IFRQ…LGDN, and IFRY…LQII. Residues lysine 106, glycine 115, glutamate 116, alanine 118, arginine 125, and serine 126 each coordinate 3',5'-cyclic GMP. Residues arginine 466, glycine 475, glutamate 476, alanine 478, arginine 485, and threonine 486 each contribute to the 3',5'-cyclic GMP site. Positions 534-791 constitute a Protein kinase domain; sequence LETERIIGRG…FKDIKEHAFF (258 aa). Residues 540 to 548 and lysine 563 each bind ATP; that span reads IGRGTFGTV. Catalysis depends on aspartate 657, which acts as the Proton acceptor. Residues 792 to 846 enclose the AGC-kinase C-terminal domain; the sequence is GNFNWDKLAGRLLEPPLVSKGETYAEDIDIKQIEEEDALNEGEPLDGDDSWDVDF. Residues 824 to 846 form a disordered region; the sequence is IEEEDALNEGEPLDGDDSWDVDF. A compositionally biased stretch (acidic residues) spans 825 to 846; it reads EEEDALNEGEPLDGDDSWDVDF.

Belongs to the protein kinase superfamily. AGC Ser/Thr protein kinase family. cGMP subfamily. Monomer. Mg(2+) serves as cofactor. In terms of processing, autophosphorylated.

It is found in the cytoplasm. The protein resides in the endoplasmic reticulum membrane. The enzyme catalyses L-seryl-[protein] + ATP = O-phospho-L-seryl-[protein] + ADP + H(+). It catalyses the reaction L-threonyl-[protein] + ATP = O-phospho-L-threonyl-[protein] + ADP + H(+). Its activity is regulated as follows. Activated by cGMP. Not activated by cAMP. cGMP binding allosterically triggers a conformational change at the alpha C-helix of cGMP-binding domain 4, which bridges the regulatory and catalytic domains, causing the capping triad, composed of Arg-477, Gln-525 and Asp-526, to form and stabilize the active conformation. The cGMP-binding domains acts cooperatively to activate PKG. In terms of biological role, serine/threonine protein kinase which acts as a downstream effector of the second messenger cGMP. Controls the release of Ca(2+) from intracellular stores by regulating phosphoinositide biosynthesis. Ca(2+) signals are essential for merozoite and sporozoite invasion and egress from host hepatocytes and erythrocytes, and, in the mosquito vector, for gametocyte activation, and ookinete and sporozoite motility. During the host liver stage, regulates the initial invasion of host hepatocytes by sporozoites by regulating sporozoite motility and microneme exocytosis. Following parasite development in the hepatocytes, required for the release of merosomes, a vesicle containing the mature merozoites. During the asexual blood stage, required for the progression from schizont to the ring stage following merozoite invasion of host erythrocytes and for merozoite egress. Regulates merozoite egress by promoting the release of exonemes and micronemes which contain proteins essential for egress. Phosphorylates CDPK1 predominantly at the late schizont stage; phosphorylation at 'Ser-64' regulates CDPK1 protein-protein interaction and phosphorylation at 'Thr-231' may regulate CDPK1 kinase activity. In the mosquito vector, required for the initiation of gametogenesis induced by xanthurenic acid, specifically the gametocyte differentiation from the crescent-shaped form to the spherical form. Required for the gliding motility of ookinetes to reach and penetrate the midgut epithelium by promoting Ca(2+)-mediated activation of CDPK1 and CDPK4. Also required for microneme secretion in ookinete by promoting Ca(2+)-mediated activation of CDPK3. The chain is cGMP-dependent protein kinase from Plasmodium vivax (strain Salvador I).